The sequence spans 309 residues: Glutaminase (309 aa).

7 residues coordinate substrate: S65, N117, E162, N169, Y193, Y245, and V263.

Belongs to the glutaminase family. Homotetramer.

It carries out the reaction L-glutamine + H2O = L-glutamate + NH4(+). The polypeptide is Glutaminase (Clostridioides difficile (strain 630) (Peptoclostridium difficile)).